A 357-amino-acid polypeptide reads, in one-letter code: tRNA N6-adenosine threonylcarbamoyltransferase (357 aa).

Residues His-115 and His-119 each coordinate Fe cation. Residues 137–141 (LASGG), Asp-170, Gly-183, and Asn-281 contribute to the substrate site. Asp-309 contributes to the Fe cation binding site.

It belongs to the KAE1 / TsaD family. Fe(2+) serves as cofactor.

Its subcellular location is the cytoplasm. It catalyses the reaction L-threonylcarbamoyladenylate + adenosine(37) in tRNA = N(6)-L-threonylcarbamoyladenosine(37) in tRNA + AMP + H(+). In terms of biological role, required for the formation of a threonylcarbamoyl group on adenosine at position 37 (t(6)A37) in tRNAs that read codons beginning with adenine. Is involved in the transfer of the threonylcarbamoyl moiety of threonylcarbamoyl-AMP (TC-AMP) to the N6 group of A37, together with TsaE and TsaB. TsaD likely plays a direct catalytic role in this reaction. The polypeptide is tRNA N6-adenosine threonylcarbamoyltransferase (Afipia carboxidovorans (strain ATCC 49405 / DSM 1227 / KCTC 32145 / OM5) (Oligotropha carboxidovorans)).